The sequence spans 65 residues: Large ribosomal subunit protein bL32 (65 aa).

Positions 1–19 (MAVQKSRKTPSKRGMRRSH) are enriched in basic residues. The segment at 1–32 (MAVQKSRKTPSKRGMRRSHNALTNPTLSEDQE) is disordered.

It belongs to the bacterial ribosomal protein bL32 family.

The protein is Large ribosomal subunit protein bL32 of Ruthia magnifica subsp. Calyptogena magnifica.